Consider the following 467-residue polypeptide: 26S proteasome regulatory subunit 7 homolog (467 aa).

Disordered regions lie at residues 1–26 (MPPKEDWEKYKAPLEDDDKKPDDDKI) and 108–140 (GNGESDETTTDNNNSGNSNSNSNQQSTDADEDD). The span at 117 to 134 (TDNNNSGNSNSNSNQQST) shows a compositional bias: low complexity. Phosphoserine is present on residues Ser-164 and Ser-231. Position 250-257 (250-257 (GPPGTGKT)) interacts with ATP.

Belongs to the AAA ATPase family. In terms of assembly, interacts with UBR1 and CIC1. Post-translationally, the N-terminus is blocked.

It is found in the cytoplasm. The protein localises to the nucleus. Its function is as follows. The 26S proteasome is involved in the ATP-dependent degradation of ubiquitinated proteins. The regulatory (or ATPase) complex confers ATP dependency and substrate specificity to the 26S complex. This is 26S proteasome regulatory subunit 7 homolog (RPT1) from Saccharomyces cerevisiae (strain ATCC 204508 / S288c) (Baker's yeast).